We begin with the raw amino-acid sequence, 430 residues long: GTPase Obg (430 aa).

The 158-residue stretch at Met-1–Leu-158 folds into the Obg domain. Positions Lys-118–Pro-145 are disordered. Residues Ala-159–Glu-329 form the OBG-type G domain. Residues Gly-165 to Ser-172, Phe-190 to Lys-194, Asp-212 to Gly-215, Asn-282 to Asp-285, and Ser-310 to Ile-312 contribute to the GTP site. Ser-172 and Thr-192 together coordinate Mg(2+). The OCT domain maps to Lys-352 to Glu-430.

The protein belongs to the TRAFAC class OBG-HflX-like GTPase superfamily. OBG GTPase family. As to quaternary structure, monomer. Requires Mg(2+) as cofactor.

Its subcellular location is the cytoplasm. Functionally, an essential GTPase which binds GTP, GDP and possibly (p)ppGpp with moderate affinity, with high nucleotide exchange rates and a fairly low GTP hydrolysis rate. Plays a role in control of the cell cycle, stress response, ribosome biogenesis and in those bacteria that undergo differentiation, in morphogenesis control. In Staphylococcus aureus (strain bovine RF122 / ET3-1), this protein is GTPase Obg.